A 258-amino-acid polypeptide reads, in one-letter code: Type III pantothenate kinase (258 aa).

Residue 6–13 participates in ATP binding; it reads DAGNTRIK. Substrate is bound by residues Y98 and 105-108; that span reads GSDR. D107 functions as the Proton acceptor in the catalytic mechanism. T131 provides a ligand contact to ATP. Substrate is bound at residue T184.

This sequence belongs to the type III pantothenate kinase family. As to quaternary structure, homodimer. The cofactor is NH4(+). K(+) is required as a cofactor.

Its subcellular location is the cytoplasm. It carries out the reaction (R)-pantothenate + ATP = (R)-4'-phosphopantothenate + ADP + H(+). Its pathway is cofactor biosynthesis; coenzyme A biosynthesis; CoA from (R)-pantothenate: step 1/5. In terms of biological role, catalyzes the phosphorylation of pantothenate (Pan), the first step in CoA biosynthesis. The polypeptide is Type III pantothenate kinase (Herminiimonas arsenicoxydans).